The sequence spans 309 residues: MANSLYQKHIISIPELSREELELIVETAGNIKKEPQPDLLKNKVIASCFFEASTRTRLSFETAIQRLGGSVIGFDSAGNTSLAQKGETLADSVQIIASYANAYVMRHPREGAARLASEFSNGTPVINAGDGANQHPTQTLLDLYTIYETQGRLDNLNIAFVGDLKYGRTVHSLTQALAKFNGVKFFFIAPEVLAMPDYICEELDELGIEYQLLNSMEEAIPELDILYMTRVQKERFDESEYAHIKSAYILSAADLKPARENLKVLHPLPRIDEINIDVDKTPHAYYFQQAENGVYARQALLALVLNESL.

Carbamoyl phosphate is bound by residues R55 and T56. Position 85 (K85) interacts with L-aspartate. 3 residues coordinate carbamoyl phosphate: R106, H135, and Q138. Residues R168 and R230 each contribute to the L-aspartate site. 2 residues coordinate carbamoyl phosphate: L268 and P269.

The protein belongs to the aspartate/ornithine carbamoyltransferase superfamily. ATCase family. As to quaternary structure, heterododecamer (2C3:3R2) of six catalytic PyrB chains organized as two trimers (C3), and six regulatory PyrI chains organized as three dimers (R2).

The enzyme catalyses carbamoyl phosphate + L-aspartate = N-carbamoyl-L-aspartate + phosphate + H(+). Its pathway is pyrimidine metabolism; UMP biosynthesis via de novo pathway; (S)-dihydroorotate from bicarbonate: step 2/3. Its function is as follows. Catalyzes the condensation of carbamoyl phosphate and aspartate to form carbamoyl aspartate and inorganic phosphate, the committed step in the de novo pyrimidine nucleotide biosynthesis pathway. The polypeptide is Aspartate carbamoyltransferase catalytic subunit (Aliivibrio salmonicida (strain LFI1238) (Vibrio salmonicida (strain LFI1238))).